The chain runs to 55 residues: Large ribosomal subunit protein bL33 (55 aa).

The protein is methylated on either Ala-2 or Lys-3.

The sequence is that of Large ribosomal subunit protein bL33 from Rhodopseudomonas palustris (strain ATCC BAA-98 / CGA009).